An 88-amino-acid chain; its full sequence is Small ribosomal subunit protein bS16 (88 aa).

This sequence belongs to the bacterial ribosomal protein bS16 family.

This is Small ribosomal subunit protein bS16 from Geobacter metallireducens (strain ATCC 53774 / DSM 7210 / GS-15).